Consider the following 148-residue polypeptide: Vascular endothelial growth factor homolog (148 aa).

Positions 1 to 25 (MKLTATLQVVVALLICMYNLPECVS) are cleaved as a signal peptide. Intrachain disulfides connect Cys46/Cys88, Cys77/Cys130, and Cys81/Cys132. Asn95 carries an N-linked (GlcNAc...) asparagine; by host glycan.

The protein belongs to the PDGF/VEGF growth factor family. As to quaternary structure, homodimer; disulfide-linked.

The protein resides in the secreted. Functionally, induces endothelial proliferation. The protein is Vascular endothelial growth factor homolog of Orf virus (strain NZ7) (OV NZ-7).